Consider the following 349-residue polypeptide: Heat-inducible transcription repressor HrcA (349 aa).

Belongs to the HrcA family.

Negative regulator of class I heat shock genes (grpE-dnaK-dnaJ and groELS operons). Prevents heat-shock induction of these operons. The polypeptide is Heat-inducible transcription repressor HrcA (Mycoplasmoides gallisepticum (strain R(low / passage 15 / clone 2)) (Mycoplasma gallisepticum)).